The primary structure comprises 231 residues: Endonuclease NucS (231 aa).

It belongs to the NucS endonuclease family.

Its subcellular location is the cytoplasm. Its function is as follows. Cleaves both 3' and 5' ssDNA extremities of branched DNA structures. This Arthrobacter sp. (strain FB24) protein is Endonuclease NucS.